The following is a 360-amino-acid chain: MKALILVGGYGTRLRPLTLSTPKPLVDFCNKPILLHQVEALAAAGVDHVILAVSYMSQMLEKEMKAQEQRLGIRISMSHEEEPLGTAGPLALARDLLSETADPFFVLNSDVICDFPFQAMVQFHRHHGQEGSILVTKVEEPSKYGVVVCEADTGRIHRFVEKPQVFVSNKINAGMYILSPAVLQRIQLKPTSIEKEIFPVMAKEGQLYAMELQGFWMDIGQPKDFLTGMCLFLQSLRQKHPERLYSGPGIVGNVLVDPSARIGQNCSIGPNVSLGPGVVVEDGVCIRRCTVLRDAHIRSHSWLESCIVGWRCRVGQWVRMENVTVLGEDVIVNDELYLNGASVLPHKSIGESVPEPRIIM.

The interval 2–222 is substrate-binding domain; the sequence is KALILVGGYG…QGFWMDIGQP (221 aa). Asp110 contacts GDP-alpha-D-mannose. Asp110 is a Mg(2+) binding site. Lys162 is a catalytic residue. Position 218 (Asp218) interacts with GDP-alpha-D-mannose. Residues 245 to 360 form a hexapeptide repeat domain region; it reads YSGPGIVGNV…ESVPEPRIIM (116 aa).

The protein belongs to the transferase hexapeptide repeat family. As to quaternary structure, component of the GMPPA-GMPPB mannose-1-phosphate guanylyltransferase complex composed of 4 GMPPA subunits and 8 GMPPB subunits; the complex is organized into three layers, a central layer made up of 2 GMPPA dimers sandwiched between two layers each made up of 2 GMPPB dimers. GMPPB catalytic activity is reduced when part of the complex and binding of GDP-alpha-D-Mannose by GMPPA induces allosteric feedback inhibition of GMPPB. The cofactor is Mg(2+).

It is found in the cytoplasm. The enzyme catalyses alpha-D-mannose 1-phosphate + GTP + H(+) = GDP-alpha-D-mannose + diphosphate. It participates in nucleotide-sugar biosynthesis; GDP-alpha-D-mannose biosynthesis; GDP-alpha-D-mannose from alpha-D-mannose 1-phosphate (GTP route): step 1/1. With respect to regulation, enzyme activity is reduced by incorporation into the GMPPA-GMPPB mannose-1-phosphate guanylyltransferase complex. Allosterically inhibited, when part of the GMPPA-GMPPB complex, by GDP-alpha-D-mannose binding to GMPPA. Its function is as follows. Catalytic subunit of the GMPPA-GMPPB mannose-1-phosphate guanylyltransferase complex. Catalyzes the formation of GDP-mannose, an essential precursor of glycan moieties of glycoproteins and glycolipids. Can catalyze the reverse reaction in vitro. Together with GMPPA regulates GDP-alpha-D-mannose levels. This chain is Mannose-1-phosphate guanylyltransferase catalytic subunit beta, found in Mus musculus (Mouse).